We begin with the raw amino-acid sequence, 343 residues long: Ribosomal RNA small subunit methyltransferase C (343 aa).

Belongs to the methyltransferase superfamily. RsmC family. In terms of assembly, monomer.

It localises to the cytoplasm. It catalyses the reaction guanosine(1207) in 16S rRNA + S-adenosyl-L-methionine = N(2)-methylguanosine(1207) in 16S rRNA + S-adenosyl-L-homocysteine + H(+). Its function is as follows. Specifically methylates the guanine in position 1207 of 16S rRNA in the 30S particle. The chain is Ribosomal RNA small subunit methyltransferase C from Escherichia coli O6:K15:H31 (strain 536 / UPEC).